The following is a 240-amino-acid chain: Uridylate kinase (240 aa).

Residues 15-18 (KISG), Gly58, and Arg62 contribute to the ATP site. UMP contacts are provided by residues Asp77 and 138–145 (TGNPLFTT). Residues Thr165, Tyr171, and Asp174 each coordinate ATP.

Belongs to the UMP kinase family. Homohexamer.

It is found in the cytoplasm. The enzyme catalyses UMP + ATP = UDP + ADP. It functions in the pathway pyrimidine metabolism; CTP biosynthesis via de novo pathway; UDP from UMP (UMPK route): step 1/1. With respect to regulation, inhibited by UTP. Functionally, catalyzes the reversible phosphorylation of UMP to UDP. The protein is Uridylate kinase of Buchnera aphidicola subsp. Schizaphis graminum (strain Sg).